Reading from the N-terminus, the 349-residue chain is Isopentenyl-diphosphate delta-isomerase (349 aa).

Substrate is bound at residue 6–7; it reads RK. FMN contacts are provided by residues 62–64, serine 93, and asparagine 122; that span reads AMT. Glutamine 152 is a substrate binding site. A Mg(2+)-binding site is contributed by glutamate 153. Residues lysine 184, threonine 214, 258–259, and 280–281 each bind FMN; these read GG and AG.

It belongs to the IPP isomerase type 2 family. In terms of assembly, homooctamer. Dimer of tetramers. The cofactor is FMN. NADPH is required as a cofactor. Mg(2+) serves as cofactor.

The protein localises to the cytoplasm. It catalyses the reaction isopentenyl diphosphate = dimethylallyl diphosphate. Involved in the biosynthesis of isoprenoids. Catalyzes the 1,3-allylic rearrangement of the homoallylic substrate isopentenyl (IPP) to its allylic isomer, dimethylallyl diphosphate (DMAPP). The sequence is that of Isopentenyl-diphosphate delta-isomerase from Bacillus anthracis (strain A0248).